A 282-amino-acid polypeptide reads, in one-letter code: Shikimate dehydrogenase (NADP(+)) (282 aa).

Shikimate contacts are provided by residues 16–18 (SLS) and Thr63. Catalysis depends on Lys67, which acts as the Proton acceptor. The shikimate site is built by Asn88 and Asp103. NADP(+)-binding positions include 128 to 132 (GAGGA) and Gly243.

It belongs to the shikimate dehydrogenase family. Homodimer.

It catalyses the reaction shikimate + NADP(+) = 3-dehydroshikimate + NADPH + H(+). Its pathway is metabolic intermediate biosynthesis; chorismate biosynthesis; chorismate from D-erythrose 4-phosphate and phosphoenolpyruvate: step 4/7. Its function is as follows. Involved in the biosynthesis of the chorismate, which leads to the biosynthesis of aromatic amino acids. Catalyzes the reversible NADPH linked reduction of 3-dehydroshikimate (DHSA) to yield shikimate (SA). This is Shikimate dehydrogenase (NADP(+)) from Xylella fastidiosa (strain Temecula1 / ATCC 700964).